An 80-amino-acid chain; its full sequence is OMEGA-myrmeciitoxin(02)-Mg1a (80 aa).

An N-terminal signal peptide occupies residues 1-30 (MKNNYISTCIVYLMAALLLISVISIKECTA). One can recognise an EGF-like domain in the interval 35 to 75 (YGDPCSDDLKDYCIHGDCFFLKELNQPACRCYTGYYGSRCE). Disulfide bonds link cysteine 39-cysteine 52, cysteine 47-cysteine 63, and cysteine 65-cysteine 74.

It belongs to the EGF domain peptide family. Expressed by the venom gland.

The protein resides in the secreted. Its function is as follows. Ant peptide with probable defensive activity which acts as a potent agonist of the mammalian epidermal growth factor receptor (EGFR) (EC(50)=6.3 nM). Mimics, both structurally and functionally, vertebrate epidermal growth factor (EGF) peptide hormones. In vivo, intraplantar injection in mice causes long-lasting (several days) hypersensitivity of the injected paw to both mechanical and thermal stimuli. Its long-lasting effect is unusual for venom toxins whose effects are usually immediate. One possible explanation is that it would reduce the duration of a nest attack, discourage future attacks, or enhance the actions of subsequent exposure to other pain-inducing venom peptides. This chain is OMEGA-myrmeciitoxin(02)-Mg1a, found in Myrmecia gulosa (Red bulldog ant).